The primary structure comprises 34 residues: Sarcoplasmic/endoplasmic reticulum calcium ATPase regulator DWORF (34 aa).

Residues 12 to 32 (IVPILLLVGWIVGCIIVIYIV) form a helical membrane-spanning segment.

In terms of assembly, homooligomer. Can also form heterooligomers with other sarcoplasmic/endoplasmic reticulum calcium ATPase (SERCA) regulators ARLN, ERLN, PLN and SLN. Monomer. Interacts with ATP2A1/SERCA1; the interaction results in activation of ATP2A1. Interacts as a monomer with ATP2A2/SERCA2; the interaction results in activation of ATP2A2. In terms of tissue distribution, highly expressed in heart (at protein level). Detected in heart and soleus, a postural muscle group of the hindlimb containing the highest enrichment of slow-twitch muscle fibers. Also expressed in diaphragm, which contains some slow-twitch fibers. Not detected in the quadriceps, a fast-twitch muscle group, or in cardiac atrial muscle. Not expressed in the prenatal heart but gradually increases in abundance postnatally.

It is found in the sarcoplasmic reticulum membrane. Functionally, enhances the activity of ATP2A1/SERCA1 ATPase in sarcoplasmic reticulum by displacing ATP2A1/SERCA1 inhibitors, thereby acting as a key regulator of skeletal muscle activity. Also enhances the activity of the ATP2A2/SERCA2 ATPase. Does not directly stimulate SERCA pump activity. Binds preferentially to the phosphorylated E1 and E2 conformational forms of ATP2A2 which predominate at high Ca(2+) concentrations during the systolic phase of the cardiac cycle. Competes with ATP2A2 inhibitor phospholamban (PLN) for binding to ATP2A2 and displaces PLN. Can activate ATP2A2 directly in the absence of PLN. Also enhances sarcoplasmic reticulum Ca(2+) uptake and myocyte contractility by displacing the SERCA inhibitory peptides sarcolipin (SLN) and myoregulin (MRLN). This Mus musculus (Mouse) protein is Sarcoplasmic/endoplasmic reticulum calcium ATPase regulator DWORF.